Reading from the N-terminus, the 80-residue chain is DNA-binding protein HU-like (80 aa).

Belongs to the bacterial histone-like protein family.

Histone-like DNA-binding protein which is capable of wrapping DNA to stabilize it, and thus to prevent its denaturation under extreme environmental conditions. The protein is DNA-binding protein HU-like of Rickettsia conorii (strain ATCC VR-613 / Malish 7).